A 78-amino-acid polypeptide reads, in one-letter code: Acyl carrier protein (78 aa).

The Carrier domain maps to 2-77 (SDIEQRVKQA…SAIDYVTKKL (76 aa)). At Ser-37 the chain carries O-(pantetheine 4'-phosphoryl)serine.

This sequence belongs to the acyl carrier protein (ACP) family. 4'-phosphopantetheine is transferred from CoA to a specific serine of apo-ACP by AcpS. This modification is essential for activity because fatty acids are bound in thioester linkage to the sulfhydryl of the prosthetic group.

It localises to the cytoplasm. The protein operates within lipid metabolism; fatty acid biosynthesis. Functionally, carrier of the growing fatty acid chain in fatty acid biosynthesis. In Acinetobacter baumannii (strain AB307-0294), this protein is Acyl carrier protein.